A 380-amino-acid chain; its full sequence is Succinyl-diaminopimelate desuccinylase (380 aa).

His69 contacts Zn(2+). The active site involves Asp71. Asp102 contributes to the Zn(2+) binding site. Glu135 acts as the Proton acceptor in catalysis. Positions 136, 164, and 353 each coordinate Zn(2+).

The protein belongs to the peptidase M20A family. DapE subfamily. In terms of assembly, homodimer. Zn(2+) is required as a cofactor. Co(2+) serves as cofactor.

It catalyses the reaction N-succinyl-(2S,6S)-2,6-diaminopimelate + H2O = (2S,6S)-2,6-diaminopimelate + succinate. It participates in amino-acid biosynthesis; L-lysine biosynthesis via DAP pathway; LL-2,6-diaminopimelate from (S)-tetrahydrodipicolinate (succinylase route): step 3/3. Catalyzes the hydrolysis of N-succinyl-L,L-diaminopimelic acid (SDAP), forming succinate and LL-2,6-diaminopimelate (DAP), an intermediate involved in the bacterial biosynthesis of lysine and meso-diaminopimelic acid, an essential component of bacterial cell walls. The sequence is that of Succinyl-diaminopimelate desuccinylase from Ruegeria pomeroyi (strain ATCC 700808 / DSM 15171 / DSS-3) (Silicibacter pomeroyi).